The following is a 242-amino-acid chain: tRNA pseudouridine synthase A (242 aa).

The Nucleophile role is filled by Asp-51. Residue Tyr-107 participates in substrate binding.

Belongs to the tRNA pseudouridine synthase TruA family. As to quaternary structure, homodimer.

It catalyses the reaction uridine(38/39/40) in tRNA = pseudouridine(38/39/40) in tRNA. Functionally, formation of pseudouridine at positions 38, 39 and 40 in the anticodon stem and loop of transfer RNAs. The chain is tRNA pseudouridine synthase A from Helicobacter pylori (strain ATCC 700392 / 26695) (Campylobacter pylori).